A 179-amino-acid chain; its full sequence is MYKFLVFSSVLVLFFAQASCQRFIQPTFRPPPTQRPIIRTARQAGQEPLWLYQGDNVPRAPSTADHPILPSKIDDVQLDPNRRYVRSVTNPENNEASIEHSHHTVDTGLDQPIESHRNTRDLRFLYPRGKLPVPTPPPFNPKPIYIDMGNRYRRHASDDQEELRQYNEHFLIPRDIFQE.

Positions 1–16 (MYKFLVFSSVLVLFFA) are cleaved as a signal peptide. Positions 17-120 (QASCQRFIQP…QPIESHRNTR (104 aa)) are excised as a propeptide. A disordered region spans residues 93–116 (NNEASIEHSHHTVDTGLDQPIESH). Residue Thr-135 is glycosylated (O-linked (GalNAc...) threonine). Positions 153–179 (RRHASDDQEELRQYNEHFLIPRDIFQE) are excised as a propeptide.

It belongs to the lebocin family. O-glycosylation is important for the antibacterial activity of lebocin, O-linked glycan structure is a disaccharide (Gal-GalNAc) in case of lebocin 1 and a monosaccharide (GalNAc) in case of lebocin 2. Hemolymph. Produced in fat body.

It localises to the secreted. Its function is as follows. Antibacterial peptide. This Bombyx mori (Silk moth) protein is Lebocin-1/2.